A 326-amino-acid chain; its full sequence is Tagatose 1,6-diphosphate aldolase (326 aa).

The protein belongs to the aldolase LacD family.

The catalysed reaction is D-tagatofuranose 1,6-bisphosphate = D-glyceraldehyde 3-phosphate + dihydroxyacetone phosphate. The protein operates within carbohydrate metabolism; D-tagatose 6-phosphate degradation; D-glyceraldehyde 3-phosphate and glycerone phosphate from D-tagatose 6-phosphate: step 2/2. The chain is Tagatose 1,6-diphosphate aldolase from Staphylococcus aureus (strain Mu3 / ATCC 700698).